We begin with the raw amino-acid sequence, 908 residues long: Hyphal wall protein 2 (908 aa).

The signal sequence occupies residues 1-20; sequence MRFATTQLATLACFILTAEA. Composition is skewed to low complexity over residues 110 to 187, 266 to 324, and 332 to 405; these read PKTA…TTSK, ESTT…TMKH, and HATT…KSST. Disordered regions lie at residues 110–221 and 263–477; these read PKTA…PSKT and TETE…IPKY. Polar residues predominate over residues 406–416; that stretch reads PASTLEYSTSI. The span at 422 to 477 shows a compositional bias: low complexity; that stretch reads TTSNSLSTKSTTLTTISRSSTSGSSVPNTTRESSTSTTTPNSSSSESKVSSAIPKY. Asparagine 449, asparagine 462, and asparagine 519 each carry an N-linked (GlcNAc...) asparagine glycan. A compositionally biased stretch (low complexity) spans 539-608; that stretch reads GTTVRSSTSE…TSTTTPESSP (70 aa). Residues 539-700 form a disordered region; the sequence is GTTVRSSTSE…TSASETSSGS (162 aa). Positions 624–638 are enriched in polar residues; that stretch reads TMESSASTTKNSSIQ. Asparagine 634 is a glycosylation site (N-linked (GlcNAc...) asparagine). Composition is skewed to low complexity over residues 639–655 and 662–677; these read STSEATTSGSSGVESSV and SSVPVTTSEWSSVVTT. A glycan (N-linked (GlcNAc...) asparagine) is linked at asparagine 684. The segment covering 685-700 has biased composition (low complexity); it reads TTLEHSTSASETSSGS. An N-linked (GlcNAc...) asparagine glycan is attached at asparagine 764. The interval 821 to 844 is disordered; that stretch reads VSTDVKPTTSSQGTKSTPVDTDSK. Glycine 887 carries GPI-anchor amidated glycine lipidation. Residues 888 to 908 constitute a propeptide, removed in mature form; sequence TGNNMKLSFGVVIAGVAAFAI.

The GPI-anchor is attached to the protein in the endoplasmic reticulum and serves to target the protein to the cell surface. There, the glucosamine-inositol phospholipid moiety is cleaved off and the GPI-modified mannoprotein is covalently attached via its lipidless GPI glycan remnant to the 1,6-beta-glucan of the outer cell wall layer.

The protein resides in the secreted. The protein localises to the cell wall. It is found in the membrane. In terms of biological role, GPI-anchored cell wall protein required for mating efficiency, biofilm formation, adhesion, filamentous growth, and oxidative stress tolerance. Involved in normal disseminated infection in a mouse systemic candidiasis model. The protein is Hyphal wall protein 2 (HWP2) of Candida albicans (strain SC5314 / ATCC MYA-2876) (Yeast).